An 868-amino-acid polypeptide reads, in one-letter code: Lysosomal cholesterol signaling protein (868 aa).

The Lumenal portion of the chain corresponds to 1 to 36 (MDSYFSAKNSTLAGDMNATWPASHGFNATGDPPSMS). Positions 1–368 (MDSYFSAKNS…SAWLLTFPTM (368 aa)) are PIN-like transporter. Residues N9, N17, and N27 are each glycosylated (N-linked (GlcNAc...) asparagine). A helical membrane pass occupies residues 37-57 (ITRLFPALLECFGIVLCGYIA). Cholesterol is bound by residues F41 and Y55. Over 58 to 77 (GRANIITSTQAKGLGNFVSR) the chain is Cytoplasmic. The chain crosses the membrane as a helical span at residues 78 to 98 (FALPALLFKNMVVLNFSNVDW). Topologically, residues 99–102 (AFLY) are lumenal. Residues 103–123 (SVLIGKASVFFIVCVLTLLVA) form a helical membrane-spanning segment. Over 124-131 (SPESRFSK) the chain is Cytoplasmic. The discontinuously helical transmembrane segment at 132–152 (AGLFPIFATQSNDFALGYPIV) threads the bilayer. Over 153–165 (EALYQSTYPEYLQ) the chain is Lumenal. Residues 166 to 186 (YIYLVAPISLMMLNPIGFIFC) form a helical membrane-spanning segment. The Cytoplasmic segment spans residues 187–211 (EIQKSKDTQNASQNKAKIVGLGFLR). A discontinuously helical membrane pass occupies residues 212-232 (VLQNPIVFMVFVGIAFNFILD). Residues 233-241 (KKIPVYMEN) lie on the Lumenal side of the membrane. A discontinuously helical transmembrane segment spans residues 242 to 262 (FLDGLANSFSGSALFYLGLTM). Topologically, residues 263–271 (VGKIRRLKK) are cytoplasmic. 3 residues coordinate cholesterol: G264, K265, and I266. The helical transmembrane segment at 272-292 (SAFVVLTLLITAKLLVLPLLC) threads the bilayer. At 293–313 (REMVELLDKGDSVVNHTSLSN) the chain is on the lumenal side. N-linked (GlcNAc...) asparagine glycosylation occurs at N307. A discontinuously helical membrane pass occupies residues 314–334 (YAFLYGVFPVAPGVAIFATQF). Topologically, residues 335–344 (NMEVEIITSG) are cytoplasmic. A helical transmembrane segment spans residues 345–365 (MVISTFVSAPIMYVSAWLLTF). Over 366 to 379 (PTMDAKPLAYAIQN) the chain is Lumenal. The tract at residues 378–715 (QNVSFDISII…FGIFGLDKHL (338 aa)) is GPCR. N379 is a glycosylation site (N-linked (GlcNAc...) asparagine). A helical membrane pass occupies residues 380–400 (VSFDISIISLVSLIWSLSILL). Residues 401-412 (LSKKYKQLPHML) are Cytoplasmic-facing. The chain crosses the membrane as a helical span at residues 413 to 433 (TANLLIAQTIVCAGMMIWNFV). Residues 434–436 (KEK) are Lumenal-facing. A helical transmembrane segment spans residues 437 to 457 (NFVGQILVFVLLYSSLYSTYL). At 458 to 478 (WTGLLAVSLFLLKKRESVQLP) the chain is on the cytoplasmic side. The chain crosses the membrane as a helical span at residues 479-499 (VGIIIISGWGIPALLVGVLLI). Topologically, residues 500 to 518 (TGKHNGDSIDSAFFYGKEQ) are lumenal. The chain crosses the membrane as a helical span at residues 519–539 (MITTAVTLFCSILIAGVSLMC). At 540–658 (MNRTTQAGHY…GDPQLTRHVL (119 aa)) the chain is on the cytoplasmic side. The tract at residues 550-582 (EGFGQSQNHKPVEPGSTAFEENPAPTNEPELFP) is disordered. Residue R655 coordinates cholesterol. A helical membrane pass occupies residues 659 to 679 (LCLLLIIGLFANLSSCLWWLF). Over 680 to 689 (NHETGRLYVE) the chain is Lumenal. The helical transmembrane segment at 690-710 (LQFFCAVFNFGQGFISFGIFG) threads the bilayer. Residues 711-868 (LDKHLIILPF…SSPPSVSPKT (158 aa)) are Cytoplasmic-facing. Positions 755 to 833 (YHRDLCIRNI…DEYLFYRFLQ (79 aa)) constitute a DEP domain. The interval 836–868 (PEQSPPARTLRDHQEESYKEIGHSSPPSVSPKT) is disordered. Over residues 844-857 (TLRDHQEESYKEIG) the composition is skewed to basic and acidic residues.

In terms of assembly, homodimer; via the transporter region and DEP domain. Interacts with the GATOR1 complex; preventing interaction between GATOR1 and KICSTOR; interaction is disrupted upon cholesterol starvation. Widely expressed in adult tissues and during development. In brain, widely distributed in forebrain regions, while it shows a more restricted distribution in the midbrain and hindbrain regions. Expressed at highest level in the lateral part of striatum and hippocampus.

The protein resides in the lysosome membrane. Cholesterol-binding protein that acts as a regulator of mTORC1 signaling pathway. Acts as a sensor of cholesterol to signal cholesterol sufficiency to mTORC1: in presence of cholesterol, binds cholesterol, leading to disruption of the interaction between the GATOR1 and KICSTOR complexes and promotion of mTORC1 signaling. Upon cholesterol starvation, GPR155/LYCHOS is unable to perturb the association between GATOR1 and KICSTOR, leading to mTORC1 signaling inhibition. Binds indole-3-acetic acid and may play a role in tryptophan metabolism. The protein is Lysosomal cholesterol signaling protein of Mus musculus (Mouse).